The sequence spans 309 residues: Ribonuclease H2 subunit B (309 aa).

Alanine 2 is subject to N-acetylalanine. Lysine 295 carries the post-translational modification N6-acetyllysine. Serine 296 is subject to Phosphoserine.

It belongs to the RNase H2 subunit B family. In terms of assembly, the RNase H2 complex is a heterotrimer composed of the catalytic subunit RNASEH2A and the non-catalytic subunits RNASEH2B and RNASEH2C.

The protein localises to the nucleus. Its function is as follows. Non catalytic subunit of RNase H2, an endonuclease that specifically degrades the RNA of RNA:DNA hybrids. Participates in DNA replication, possibly by mediating the removal of lagging-strand Okazaki fragment RNA primers during DNA replication. Mediates the excision of single ribonucleotides from DNA:RNA duplexes. The polypeptide is Ribonuclease H2 subunit B (RNASEH2B) (Bos taurus (Bovine)).